A 343-amino-acid polypeptide reads, in one-letter code: Dihydroorotate dehydrogenase (quinone) (343 aa).

FMN is bound by residues 58 to 62 (AGYDK) and S82. A substrate-binding site is contributed by K62. 107 to 111 (NRMGF) lines the substrate pocket. FMN-binding residues include N136 and N167. N167 serves as a coordination point for substrate. The Nucleophile role is filled by S170. Position 172 (N172) interacts with substrate. 2 residues coordinate FMN: K206 and S234. A substrate-binding site is contributed by 235–236 (NT). FMN is bound by residues G256, G285, and 306-307 (YS).

This sequence belongs to the dihydroorotate dehydrogenase family. Type 2 subfamily. In terms of assembly, monomer. FMN serves as cofactor.

The protein resides in the cell membrane. The catalysed reaction is (S)-dihydroorotate + a quinone = orotate + a quinol. It participates in pyrimidine metabolism; UMP biosynthesis via de novo pathway; orotate from (S)-dihydroorotate (quinone route): step 1/1. Catalyzes the conversion of dihydroorotate to orotate with quinone as electron acceptor. This chain is Dihydroorotate dehydrogenase (quinone), found in Erythrobacter litoralis (strain HTCC2594).